The primary structure comprises 409 residues: SPI-1 type 3 secretion system translocon protein SctB (409 aa).

A helical transmembrane segment spans residues Ile-119–Leu-140. Polar residues predominate over residues Glu-350–Ser-368. Residues Glu-350 to Ser-378 are disordered.

The protein belongs to the SctB/SipC family. In terms of assembly, the core secretion machinery of the T3SS is composed of approximately 20 different proteins, including cytoplasmic components, a base, an export apparatus and a needle. This subunit is involved in the formation of a pore, called the translocon, in host membrane.

It is found in the secreted. It localises to the host membrane. Component of the type III secretion system 1 (SPI-1 T3SS), also called injectisome, which is used to inject bacterial effector proteins into eukaryotic host cells. SipB/SctE1 and SipC/SctB1 are inserted into the host membrane where they form a pore and allow the translocation of effector proteins into the cytosol of target cells. This is SPI-1 type 3 secretion system translocon protein SctB from Salmonella typhi.